Reading from the N-terminus, the 456-residue chain is Chitobiosyldiphosphodolichol beta-mannosyltransferase (456 aa).

Residues 1 to 22 (MGEIIKYKGFDHVWQYSGPWLY) lie on the Lumenal side of the membrane. A helical membrane pass occupies residues 23–43 (CLIGIYISLPVLAYHILPWIF). At 44-103 (HKNRSNKRKTISIFVLGDLGHSPRMCYHASSFSKLDYYVNLCGYVETEPSHQIVDDVNID) the chain is on the cytoplasmic side. Positions 104 to 124 (IIPIEAIKNTNNLPYIMFAIL) form an intramembrane region, helical. Residues 125–456 (KVVRQCGKIW…TFSSIFENKS (332 aa)) lie on the Cytoplasmic side of the membrane.

It belongs to the glycosyltransferase group 1 family.

It is found in the endoplasmic reticulum membrane. It carries out the reaction an N,N'-diacetylchitobiosyl-diphospho-di-trans,poly-cis-dolichol + GDP-alpha-D-mannose = a beta-D-Man-(1-&gt;4)-beta-D-GlcNAc-(1-&gt;4)-alpha-D-GlcNAc-diphospho-di-trans,poly-cis-dolichol + GDP + H(+). The protein operates within protein modification; protein glycosylation. Participates in the formation of the lipid-linked precursor oligosaccharide for N-glycosylation. Involved in assembling the dolichol-pyrophosphate-GlcNAc(2)-Man(5) intermediate on the cytoplasmic surface of the ER. The chain is Chitobiosyldiphosphodolichol beta-mannosyltransferase (ALG1) from Candida albicans (strain SC5314 / ATCC MYA-2876) (Yeast).